The primary structure comprises 454 residues: Glycosyl hydrolase family 109 protein (454 aa).

The segment at residues 1-29 (MFAMKRREFIAASAAVAASSLLPQTPAWA) is a signal peptide (tat-type signal). Residues 43–44 (MR), D65, 116–119 (WEYH), 136–137 (EV), and N165 contribute to the NAD(+) site. Y194 contributes to the substrate binding site. 224 to 228 (SEARW) contributes to the NAD(+) binding site. Substrate is bound by residues R229, 241 to 244 (YPSH), and Y324. Y241 lines the NAD(+) pocket.

Belongs to the Gfo/Idh/MocA family. Glycosyl hydrolase 109 subfamily. The cofactor is NAD(+). Predicted to be exported by the Tat system. The position of the signal peptide cleavage has not been experimentally proven.

Functionally, glycosidase. The sequence is that of Glycosyl hydrolase family 109 protein from Stenotrophomonas maltophilia (strain K279a).